The chain runs to 387 residues: MDKKVINDKFTEIFGEQAEATFFSPGRINLIGEHTDYNGGHVFPCAISLGTYGAARKREDNKLRFYSANFEDLGIIETSLDDLKYDKKDNWVNYAKGMIYFLKETGHDVDKGMDIFIEGNIPNGSGLSSSASLEMLIGVIAQELFNLDIDRVDLVKLGMETENKFIGVNSGIMDQFAVGMGKQNQAILLDTNTLEYSYAPVDMGNNVIVIMNTNKRRELADSKYNERRSECETAVGELQAKLDIKTLGELDAQTFDEYAYLIEDENRLKRARHAVWENQRTMQAQAALEEGDLEKFGRLVNASHVSLEHDYEVTGIELDTLAHTAWKQEGVLGARMTGAGFGGCGIAIVDKDKVEAFKENVGKVYTEKIGYAPAFYIAEIADGTKVL.

33-36 contributes to the substrate binding site; it reads EHTD. Residues Ser-67 and 124–130 contribute to the ATP site; that span reads GSGLSSS. Mg(2+) contacts are provided by Ser-130 and Glu-162. Asp-174 (proton acceptor) is an active-site residue. Tyr-224 contacts substrate.

This sequence belongs to the GHMP kinase family. GalK subfamily.

It is found in the cytoplasm. The catalysed reaction is alpha-D-galactose + ATP = alpha-D-galactose 1-phosphate + ADP + H(+). It participates in carbohydrate metabolism; galactose metabolism. Its function is as follows. Catalyzes the transfer of the gamma-phosphate of ATP to D-galactose to form alpha-D-galactose-1-phosphate (Gal-1-P). The sequence is that of Galactokinase from Ligilactobacillus salivarius (strain UCC118) (Lactobacillus salivarius).